A 308-amino-acid chain; its full sequence is Elongation factor Ts (308 aa).

The tract at residues 80–83 is involved in Mg(2+) ion dislocation from EF-Tu; that stretch reads TDFV.

The protein belongs to the EF-Ts family.

It localises to the cytoplasm. In terms of biological role, associates with the EF-Tu.GDP complex and induces the exchange of GDP to GTP. It remains bound to the aminoacyl-tRNA.EF-Tu.GTP complex up to the GTP hydrolysis stage on the ribosome. This Parvibaculum lavamentivorans (strain DS-1 / DSM 13023 / NCIMB 13966) protein is Elongation factor Ts.